The following is a 180-amino-acid chain: Oligoribonuclease (180 aa).

Residues 7–170 (LIWIDLEMTG…DDIRDSINEL (164 aa)) form the Exonuclease domain. The active site involves tyrosine 128.

It belongs to the oligoribonuclease family.

It is found in the cytoplasm. Functionally, 3'-to-5' exoribonuclease specific for small oligoribonucleotides. This is Oligoribonuclease from Marinobacter nauticus (strain ATCC 700491 / DSM 11845 / VT8) (Marinobacter aquaeolei).